The chain runs to 567 residues: Restriction of telomere capping protein 5 (567 aa).

In terms of domain architecture, TLDc spans 289-515 (KVMTPALLAQ…IQDVEVWGCG (227 aa)).

Belongs to the RTC5 family.

The protein resides in the cytoplasm. Its function is as follows. May be involved in a process influencing telomere capping. This Saccharomyces cerevisiae (strain RM11-1a) (Baker's yeast) protein is Restriction of telomere capping protein 5 (RTC5).